The following is a 230-amino-acid chain: UPF0494 membrane protein PB2B2.14c (230 aa).

The next 3 membrane-spanning stretches (helical) occupy residues 78–98 (WPLLIIWCILIVFAIDKNFEV), 120–140 (IWGPIAIYICLFVLLLLGLIY), and 148–168 (AIPLISIVIAAVVVIIAVAMV).

This sequence belongs to the UPF0494 family.

It localises to the membrane. In Schizosaccharomyces pombe (strain 972 / ATCC 24843) (Fission yeast), this protein is UPF0494 membrane protein PB2B2.14c.